Reading from the N-terminus, the 113-residue chain is Large ribosomal subunit protein uL22 (113 aa).

This sequence belongs to the universal ribosomal protein uL22 family. In terms of assembly, part of the 50S ribosomal subunit.

This protein binds specifically to 23S rRNA; its binding is stimulated by other ribosomal proteins, e.g. L4, L17, and L20. It is important during the early stages of 50S assembly. It makes multiple contacts with different domains of the 23S rRNA in the assembled 50S subunit and ribosome. Its function is as follows. The globular domain of the protein is located near the polypeptide exit tunnel on the outside of the subunit, while an extended beta-hairpin is found that lines the wall of the exit tunnel in the center of the 70S ribosome. The chain is Large ribosomal subunit protein uL22 from Bacillus pumilus (strain SAFR-032).